We begin with the raw amino-acid sequence, 61 residues long: Defensin BmKDfsin2 (61 aa).

Positions 1-24 are cleaved as a signal peptide; it reads METIVLLFLLALVFCTLEMGMVEA. Disulfide bonds link cysteine 28/cysteine 49, cysteine 35/cysteine 57, and cysteine 39/cysteine 59.

Belongs to the invertebrate defensin family. Type 2 subfamily. Highly expressed in non-venom gland (hemolymph) and moderately expressed in venom gland.

The protein resides in the secreted. Its function is as follows. Antibacterial peptide active against Gram-positive bacteria, but not on Gram-negative bacteria. Also has weak blocking activity on Kv1.1/KCNA1, Kv1.2/KCNA2, Kv1.3/KCNA3, KCa3.1/KCNN4/IK, KCa2.3/KCNN3/SK3 and Kv11.1/KCNH2/ERG1 channels (tested at 1 uM). It inhibits potassium channel current by interacting with the pore region. The chain is Defensin BmKDfsin2 from Olivierus martensii (Manchurian scorpion).